A 179-amino-acid polypeptide reads, in one-letter code: Large ribosomal subunit protein uL6 (179 aa).

This sequence belongs to the universal ribosomal protein uL6 family. In terms of assembly, part of the 50S ribosomal subunit.

Its function is as follows. This protein binds to the 23S rRNA, and is important in its secondary structure. It is located near the subunit interface in the base of the L7/L12 stalk, and near the tRNA binding site of the peptidyltransferase center. This Kineococcus radiotolerans (strain ATCC BAA-149 / DSM 14245 / SRS30216) protein is Large ribosomal subunit protein uL6.